We begin with the raw amino-acid sequence, 404 residues long: Glucose-1-phosphate adenylyltransferase (404 aa).

Alpha-D-glucose 1-phosphate contacts are provided by residues Tyr-99, Gly-164, 179 to 180 (EK), and Ser-197.

This sequence belongs to the bacterial/plant glucose-1-phosphate adenylyltransferase family. Homotetramer.

The catalysed reaction is alpha-D-glucose 1-phosphate + ATP + H(+) = ADP-alpha-D-glucose + diphosphate. Its pathway is glycan biosynthesis; glycogen biosynthesis. Involved in the biosynthesis of ADP-glucose, a building block required for the elongation reactions to produce glycogen. Catalyzes the reaction between ATP and alpha-D-glucose 1-phosphate (G1P) to produce pyrophosphate and ADP-Glc. In Rhodococcus jostii (strain RHA1), this protein is Glucose-1-phosphate adenylyltransferase.